Here is a 556-residue protein sequence, read N- to C-terminus: Beta-caryophyllene synthase TPS9FN (556 aa).

5 residues coordinate (2E,6E)-farnesyl diphosphate: Arg273, Asp310, Asp314, Arg451, and Asp454. Residues Asp310 and Asp314 each coordinate Mg(2+). The DDXXD motif signature appears at 310-314 (DDIYD). Residues Asp454, Ser458, and Glu462 each coordinate Mg(2+).

It belongs to the terpene synthase family. Tpsb subfamily. Requires Mg(2+) as cofactor. Mn(2+) is required as a cofactor. Expressed in glandular trichomes two to four weeks after flowering onset.

It catalyses the reaction (2E,6E)-farnesyl diphosphate = (-)-(E)-beta-caryophyllene + diphosphate. The enzyme catalyses (2E,6E)-farnesyl diphosphate = alpha-humulene + diphosphate. It participates in secondary metabolite biosynthesis; terpenoid biosynthesis. In terms of biological role, involved in sesquiterpene olefins biosynthesis, constituants of cannabinoids and terpenoids-rich resins. Catalyzes mainly the conversion of (2E)-farnesyl diphosphate to beta-caryophyllene and alpha-humulene. Can also use (2E)-geranyl diphosphate as substrate with low efficiency. In Cannabis sativa (Hemp), this protein is Beta-caryophyllene synthase TPS9FN.